A 535-amino-acid polypeptide reads, in one-letter code: Dimethylaniline monooxygenase [N-oxide-forming] 2 (535 aa).

Alanine 2 carries the post-translational modification N-acetylalanine. FAD is bound by residues 9-13 (GAGVS), glutamate 32, 40-41 (LW), and 61-62 (NT). NADP(+) is bound by residues 60–61 (TN) and 195–198 (SASD). A Glycyl lysine isopeptide (Lys-Gly) (interchain with G-Cter in SUMO) cross-link involves residue lysine 492. Residues 510–530 (FPVSFLLKFLGLFALVLAFLF) traverse the membrane as a helical segment.

The protein belongs to the FMO family. Requires FAD as cofactor. It depends on Mg(2+) as a cofactor. In terms of tissue distribution, lung.

It localises to the microsome membrane. Its subcellular location is the endoplasmic reticulum membrane. The enzyme catalyses N,N-dimethylaniline + NADPH + O2 + H(+) = N,N-dimethylaniline N-oxide + NADP(+) + H2O. Catalyzes the oxidative metabolism of numerous xenobiotics, including mainly therapeutic drugs and insecticides that contain a soft nucleophile, most commonly nitrogen and sulfur and participates to their bioactivation. Most drug substrates are tertiary amines such as prochlorperazine and trifluoperazine which are N-oxygenated to form the N-oxide, or sulfides such as thiourea and ethionamide, which are S-oxygenated to the sulfoxide. Others include primary alkylamines such as N-dodecylamine and octan-1-amine that are sequentially monooxygenated to oximes through intermediate hydroxylamines and both steps are NADPH- and oxygen-dependent. Also metabolized N-Deacetyl ketoconazole (DAK) to N-hydroxy-DAK and appears to further metabolizes N-hydroxy-DAK to two others metabolites. Also catalyzes S-oxygenation of the thioether-containing organophosphate insecticides, phorate and disulfoton. This chain is Dimethylaniline monooxygenase [N-oxide-forming] 2, found in Oryctolagus cuniculus (Rabbit).